The primary structure comprises 310 residues: UPF0324 membrane protein GSU2818 (310 aa).

9 helical membrane passes run 11–33 (FTILLALCATPWVGTAQALVMGI), 53–72 (MLLQASVVGLGFGLSLGEVI), 79–97 (IWYSVIGISCTLLVGYGLG), 107–129 (SALISFGTAICGGSAIAAMAPVL), 136–158 (TAVALATVFTLNSAALLLFPLVG), 193–215 (ALAIGTTVKLTRAIWIAPVVMAA), 227–244 (IPLFIIGFLGAAAIRTLL), 254–273 (LAGVAKQCLVVTLFLVGAGL), and 286–308 (LVQAVSLWVLVSALTLVALKLPW).

This sequence belongs to the UPF0324 family.

It is found in the cell membrane. The polypeptide is UPF0324 membrane protein GSU2818 (Geobacter sulfurreducens (strain ATCC 51573 / DSM 12127 / PCA)).